Reading from the N-terminus, the 167-residue chain is Peptide deformylase (167 aa).

Positions 91 and 133 each coordinate Fe cation. The active site involves E134. H137 serves as a coordination point for Fe cation.

The protein belongs to the polypeptide deformylase family. Requires Fe(2+) as cofactor.

The catalysed reaction is N-terminal N-formyl-L-methionyl-[peptide] + H2O = N-terminal L-methionyl-[peptide] + formate. In terms of biological role, removes the formyl group from the N-terminal Met of newly synthesized proteins. Requires at least a dipeptide for an efficient rate of reaction. N-terminal L-methionine is a prerequisite for activity but the enzyme has broad specificity at other positions. This is Peptide deformylase from Baumannia cicadellinicola subsp. Homalodisca coagulata.